The chain runs to 38 residues: Cytochrome b6-f complex subunit 5 (38 aa).

The helical transmembrane segment at 5-25 threads the bilayer; sequence LLLGIVLGLIPITLAGLFVAA.

The protein belongs to the PetG family. The 4 large subunits of the cytochrome b6-f complex are cytochrome b6, subunit IV (17 kDa polypeptide, PetD), cytochrome f and the Rieske protein, while the 4 small subunits are PetG, PetL, PetM and PetN. The complex functions as a dimer.

The protein resides in the cellular thylakoid membrane. Its function is as follows. Component of the cytochrome b6-f complex, which mediates electron transfer between photosystem II (PSII) and photosystem I (PSI), cyclic electron flow around PSI, and state transitions. PetG is required for either the stability or assembly of the cytochrome b6-f complex. This chain is Cytochrome b6-f complex subunit 5, found in Crocosphaera subtropica (strain ATCC 51142 / BH68) (Cyanothece sp. (strain ATCC 51142)).